The chain runs to 200 residues: Cytochrome c biogenesis ATP-binding export protein CcmA (200 aa).

Residues 1-200 form the ABC transporter domain; sequence MRLSGRGLRC…TREMRIGAAA (200 aa). 35-42 lines the ATP pocket; that stretch reads GRNGAGKT.

Belongs to the ABC transporter superfamily. CcmA exporter (TC 3.A.1.107) family. As to quaternary structure, the complex is composed of two ATP-binding proteins (CcmA) and two transmembrane proteins (CcmB).

The protein resides in the cell inner membrane. The catalysed reaction is heme b(in) + ATP + H2O = heme b(out) + ADP + phosphate + H(+). In terms of biological role, part of the ABC transporter complex CcmAB involved in the biogenesis of c-type cytochromes; once thought to export heme, this seems not to be the case, but its exact role is uncertain. Responsible for energy coupling to the transport system. This is Cytochrome c biogenesis ATP-binding export protein CcmA from Rhodopseudomonas palustris (strain HaA2).